We begin with the raw amino-acid sequence, 252 residues long: MTVRAALVFLLAVGLTGCVTSGDQNPLKTDKGRDEARDAYIQLGLGYLQRGNTEQAKVPLRKALEIDPSSADAHAALAVVFQTEMEPKLADEEYRKALASDSRNARVLNNYGGFLYEQKRYEEAYQRLLEASQDTLYPERSRVFENLGLVSLQMKKPAQAKEYFEKSLRLNRNQPSVALEMADLLYKEREYVPARQYYDLFAQGGGQNARSLLLGIRLAKVFEDRDTAASYGLQLKRLYPGSLEYQEFQAEK.

A signal peptide spans 1 to 17; the sequence is MTVRAALVFLLAVGLTG. Cys-18 carries N-palmitoyl cysteine lipidation. Residue Cys-18 is the site of S-diacylglycerol cysteine attachment. 6 TPR repeats span residues 32-67, 84-101, 104-133, 139-171, 174-203, and 208-235; these read GRDE…LEID, EMEP…LASD, NARV…EASQ, ERSR…LRLN, QPSV…LFAQ, and NARS…GLQL.

As to quaternary structure, interacts with PilQ; this interaction is essential for assemby of PilQ into secretins.

The protein localises to the cell outer membrane. Functionally, essential component of the type IV pilus (T4P) that plays a role in surface and host cell adhesion, colonization, biofilm maturation, virulence, and twitching, a form of surface-associated motility facilitated by cycles of extension, adhesion, and retraction of T4P fibers. Plays an essential role in the outer membrane localization and assembly of PilQ into secretins which are dodecamers of PilQ. This Pseudomonas aeruginosa (strain ATCC 15692 / DSM 22644 / CIP 104116 / JCM 14847 / LMG 12228 / 1C / PRS 101 / PAO1) protein is Type IV pilus assembly protein PilF (pilF).